A 180-amino-acid chain; its full sequence is uncharacterized protein (180 aa).

This is an uncharacterized protein from Haemophilus influenzae (strain ATCC 51907 / DSM 11121 / KW20 / Rd).